The chain runs to 437 residues: Anhydromevalonate phosphate decarboxylase (437 aa).

Asn-136 and Glu-199 together coordinate Mn(2+). Asp-247 acts as the Proton acceptor in catalysis.

The protein belongs to the UbiD family. It depends on prenylated FMN as a cofactor. The cofactor is Mn(2+).

The catalysed reaction is (2E)-3-methyl-5-phosphooxypent-2-enoate + H(+) = isopentenyl phosphate + CO2. The protein operates within isoprenoid biosynthesis; isopentenyl diphosphate biosynthesis via mevalonate pathway. Functionally, catalyzes the conversion of trans-anhydromevalonate 5-phosphate (tAHMP) into isopentenyl phosphate. Involved in the archaeal mevalonate (MVA) pathway, which provides fundamental precursors for isoprenoid biosynthesis, such as isopentenyl diphosphate (IPP) and dimethylallyl diphosphate (DMAPP). The protein is Anhydromevalonate phosphate decarboxylase of Aeropyrum pernix (strain ATCC 700893 / DSM 11879 / JCM 9820 / NBRC 100138 / K1).